The following is a 193-amino-acid chain: Pyridoxal 5'-phosphate synthase subunit PdxT (193 aa).

An L-glutamine-binding site is contributed by 50 to 52; that stretch reads GES. The active-site Nucleophile is cysteine 82. L-glutamine is bound by residues arginine 109 and 136-137; that span reads IR. Active-site charge relay system residues include histidine 172 and glutamate 174.

The protein belongs to the glutaminase PdxT/SNO family. In the presence of PdxS, forms a dodecamer of heterodimers. Only shows activity in the heterodimer.

It catalyses the reaction aldehydo-D-ribose 5-phosphate + D-glyceraldehyde 3-phosphate + L-glutamine = pyridoxal 5'-phosphate + L-glutamate + phosphate + 3 H2O + H(+). The enzyme catalyses L-glutamine + H2O = L-glutamate + NH4(+). Its pathway is cofactor biosynthesis; pyridoxal 5'-phosphate biosynthesis. Catalyzes the hydrolysis of glutamine to glutamate and ammonia as part of the biosynthesis of pyridoxal 5'-phosphate. The resulting ammonia molecule is channeled to the active site of PdxS. This is Pyridoxal 5'-phosphate synthase subunit PdxT from Streptococcus pneumoniae serotype 2 (strain D39 / NCTC 7466).